The chain runs to 282 residues: tRNA (guanine-N(1)-)-methyltransferase (282 aa).

S-adenosyl-L-methionine is bound at residue 145–150 (IGDYVL).

It belongs to the RNA methyltransferase TrmD family. In terms of assembly, homodimer.

It localises to the cytoplasm. The catalysed reaction is guanosine(37) in tRNA + S-adenosyl-L-methionine = N(1)-methylguanosine(37) in tRNA + S-adenosyl-L-homocysteine + H(+). Functionally, specifically methylates guanosine-37 in various tRNAs. In Streptomyces avermitilis (strain ATCC 31267 / DSM 46492 / JCM 5070 / NBRC 14893 / NCIMB 12804 / NRRL 8165 / MA-4680), this protein is tRNA (guanine-N(1)-)-methyltransferase.